We begin with the raw amino-acid sequence, 251 residues long: Pyridoxine 5'-phosphate synthase (251 aa).

Asn-7 contributes to the 3-amino-2-oxopropyl phosphate binding site. Asp-9–His-10 contributes to the 1-deoxy-D-xylulose 5-phosphate binding site. Arg-18 is a binding site for 3-amino-2-oxopropyl phosphate. The active-site Proton acceptor is the His-43. 1-deoxy-D-xylulose 5-phosphate contacts are provided by Arg-45 and His-50. Glu-73 serves as the catalytic Proton acceptor. Thr-103 is a binding site for 1-deoxy-D-xylulose 5-phosphate. His-197 acts as the Proton donor in catalysis. 3-amino-2-oxopropyl phosphate is bound by residues Gly-198 and Gly-219–His-220.

The protein belongs to the PNP synthase family. Homooctamer; tetramer of dimers.

It localises to the cytoplasm. The catalysed reaction is 3-amino-2-oxopropyl phosphate + 1-deoxy-D-xylulose 5-phosphate = pyridoxine 5'-phosphate + phosphate + 2 H2O + H(+). Its pathway is cofactor biosynthesis; pyridoxine 5'-phosphate biosynthesis; pyridoxine 5'-phosphate from D-erythrose 4-phosphate: step 5/5. Catalyzes the complicated ring closure reaction between the two acyclic compounds 1-deoxy-D-xylulose-5-phosphate (DXP) and 3-amino-2-oxopropyl phosphate (1-amino-acetone-3-phosphate or AAP) to form pyridoxine 5'-phosphate (PNP) and inorganic phosphate. This chain is Pyridoxine 5'-phosphate synthase, found in Caulobacter sp. (strain K31).